A 316-amino-acid chain; its full sequence is Aspartate carbamoyltransferase catalytic subunit (316 aa).

Carbamoyl phosphate is bound by residues arginine 58 and threonine 59. Lysine 86 is a binding site for L-aspartate. Arginine 108, histidine 136, and glutamine 139 together coordinate carbamoyl phosphate. Residues arginine 169 and arginine 223 each coordinate L-aspartate. Residues glycine 265 and proline 266 each coordinate carbamoyl phosphate.

Belongs to the aspartate/ornithine carbamoyltransferase superfamily. ATCase family. Heterododecamer (2C3:3R2) of six catalytic PyrB chains organized as two trimers (C3), and six regulatory PyrI chains organized as three dimers (R2).

The enzyme catalyses carbamoyl phosphate + L-aspartate = N-carbamoyl-L-aspartate + phosphate + H(+). It functions in the pathway pyrimidine metabolism; UMP biosynthesis via de novo pathway; (S)-dihydroorotate from bicarbonate: step 2/3. Functionally, catalyzes the condensation of carbamoyl phosphate and aspartate to form carbamoyl aspartate and inorganic phosphate, the committed step in the de novo pyrimidine nucleotide biosynthesis pathway. The sequence is that of Aspartate carbamoyltransferase catalytic subunit from Anaeromyxobacter sp. (strain Fw109-5).